Here is a 413-residue protein sequence, read N- to C-terminus: NPL4-like protein 1 (413 aa).

At Ser-104 the chain carries Phosphoserine. Residues 131 to 272 enclose the MPN domain; that stretch reads SVSFDRDCAN…ADVHFEPFQM (142 aa).

It belongs to the NPL4 family.

It functions in the pathway protein degradation; proteasomal ubiquitin-dependent pathway. Functionally, may be part of a complex that binds ubiquitinated proteins and that is necessary for the export of misfolded proteins from the ER to the cytoplasm, where they are degraded by the proteasome. The protein is NPL4-like protein 1 of Arabidopsis thaliana (Mouse-ear cress).